We begin with the raw amino-acid sequence, 530 residues long: Phosphoenolpyruvate carboxykinase (ATP) (530 aa).

Residues Arg60, Tyr195, and Lys201 each coordinate substrate. ATP is bound by residues Lys201, His221, and 237–245 (GLSGTGKTT). Lys201 and His221 together coordinate Mn(2+). Asp258 provides a ligand contact to Mn(2+). ATP is bound by residues Glu286, Arg324, 443 to 444 (RI), and Ser449. Substrate is bound at residue Arg324.

The protein belongs to the phosphoenolpyruvate carboxykinase (ATP) family. Requires Mn(2+) as cofactor.

Its subcellular location is the cytoplasm. The enzyme catalyses oxaloacetate + ATP = phosphoenolpyruvate + ADP + CO2. Its pathway is carbohydrate biosynthesis; gluconeogenesis. Involved in the gluconeogenesis. Catalyzes the conversion of oxaloacetate (OAA) to phosphoenolpyruvate (PEP) through direct phosphoryl transfer between the nucleoside triphosphate and OAA. In Pelobacter propionicus (strain DSM 2379 / NBRC 103807 / OttBd1), this protein is Phosphoenolpyruvate carboxykinase (ATP).